The following is a 561-amino-acid chain: Urocanate hydratase (561 aa).

NAD(+) contacts are provided by residues 52–53 (GG), Gln-130, 176–178 (GMG), Glu-196, Arg-201, 242–243 (NA), 263–267 (QTSAH), 273–274 (YL), and Tyr-322. Residue Cys-410 is part of the active site. Gly-492 lines the NAD(+) pocket.

This sequence belongs to the urocanase family. NAD(+) is required as a cofactor.

The protein resides in the cytoplasm. The catalysed reaction is 4-imidazolone-5-propanoate = trans-urocanate + H2O. Its pathway is amino-acid degradation; L-histidine degradation into L-glutamate; N-formimidoyl-L-glutamate from L-histidine: step 2/3. Catalyzes the conversion of urocanate to 4-imidazolone-5-propionate. This is Urocanate hydratase from Enterobacter sp. (strain 638).